Reading from the N-terminus, the 297-residue chain is NADPH-dependent 1-acyldihydroxyacetone phosphate reductase (297 aa).

Residues 16 to 20 carry the GXSXG motif; the sequence is GASGG. Ser18 functions as the Nucleophile; for lipase activity in the catalytic mechanism. Residues Ile21, Asp64, Asn93, Arg126, Tyr157, Lys161, Val190, and Thr192 each contribute to the NADP(+) site. Tyr157 functions as the Proton acceptor in the catalytic mechanism. Lys161 serves as the catalytic Lowers pKa of active site Tyr.

It belongs to the short-chain dehydrogenases/reductases (SDR) family.

The protein resides in the lipid droplet. It localises to the mitochondrion outer membrane. The protein localises to the endoplasmic reticulum. It carries out the reaction a 1-acylglycerone 3-phosphate + NADPH + H(+) = a 1-acyl-sn-glycero-3-phosphate + NADP(+). It catalyses the reaction 1-hexadecanoyl-sn-glycero-3-phosphate + NADP(+) = 1-hexadecanoylglycerone 3-phosphate + NADPH + H(+). The catalysed reaction is a triacylglycerol + H2O = a diacylglycerol + a fatty acid + H(+). The enzyme catalyses 1,2,3-tri-(9Z-octadecenoyl)-glycerol + H2O = di-(9Z)-octadecenoylglycerol + (9Z)-octadecenoate + H(+). Its activity is regulated as follows. Inhibited by divalent cations and N-ethylmaleimide. Activity is reduced under anaerobic growth conditions. Functionally, can convert acyl and alkyl dihydroxyacetone-phosphate (DHAP) into glycerolipids and ether lipids, respectively. Required for the biosynthesis of phosphatidic acid via the DHAP pathway, where it reduces 1-acyl DHAP to lysophosphatidic acid (LPA). Also has triacylglycerol (TAG) lipase activity. Involved in the mobilization of the non-polar storage lipids triacylglycerols (TAGs) from lipid particles by hydrolysis of TAGs. Required for spore germination. Plays a role in cell wall biogenesis, but this effect may be indirect by affecting the activities of cell wall synthesis enzymes. Lipolysis of TAG by AYR1 is essential for starvation-induced autophagy. Forms an NADPH-regulated cation-selective channel in the mitochondrial outer membrane. The protein is NADPH-dependent 1-acyldihydroxyacetone phosphate reductase of Saccharomyces cerevisiae (strain ATCC 204508 / S288c) (Baker's yeast).